Reading from the N-terminus, the 812-residue chain is Hyaluronate lyase HylB (812 aa).

A signal peptide (tat-type signal) is located at residues 1-32 (MFGTPSRRTFLTASALSAMALAASPTVTDAIA). Active-site residues include N222, H272, and Y281.

Belongs to the polysaccharide lyase 8 family. Predicted to be exported by the Tat system. The position of the signal peptide cleavage has been experimentally proven.

It is found in the secreted. The catalysed reaction is [hyaluronan](n) = n 3-(4-deoxy-beta-D-gluc-4-enuronosyl)-N-acetyl-D-glucosamine + H2O. Its function is as follows. Degrades hyaluronic acid (HA) exclusively into HA disaccharides (HA-2). Produced HA-2s confer anti-inflammatory properties leading to reduced immunopathology in the mouse model of acne. The chain is Hyaluronate lyase HylB from Cutibacterium acnes (Propionibacterium acnes).